The sequence spans 219 residues: Cytochrome c biogenesis ATP-binding export protein CcmA (219 aa).

The ABC transporter domain occupies 10 to 218; the sequence is ISAVNLTCIR…TLDYSYDSAV (209 aa). 42–49 provides a ligand contact to ATP; that stretch reads GPNGSGKT.

Belongs to the ABC transporter superfamily. CcmA exporter (TC 3.A.1.107) family. As to quaternary structure, the complex is composed of two ATP-binding proteins (CcmA) and two transmembrane proteins (CcmB).

The protein localises to the cell inner membrane. It catalyses the reaction heme b(in) + ATP + H2O = heme b(out) + ADP + phosphate + H(+). Part of the ABC transporter complex CcmAB involved in the biogenesis of c-type cytochromes; once thought to export heme, this seems not to be the case, but its exact role is uncertain. Responsible for energy coupling to the transport system. The chain is Cytochrome c biogenesis ATP-binding export protein CcmA from Colwellia psychrerythraea (strain 34H / ATCC BAA-681) (Vibrio psychroerythus).